Reading from the N-terminus, the 350-residue chain is Uroporphyrinogen decarboxylase (350 aa).

Substrate is bound by residues 28 to 32 (RQAGR), Asp-78, Tyr-155, Ser-210, and His-325.

The protein belongs to the uroporphyrinogen decarboxylase family. In terms of assembly, homodimer.

It localises to the cytoplasm. The enzyme catalyses uroporphyrinogen III + 4 H(+) = coproporphyrinogen III + 4 CO2. It functions in the pathway porphyrin-containing compound metabolism; protoporphyrin-IX biosynthesis; coproporphyrinogen-III from 5-aminolevulinate: step 4/4. Its function is as follows. Catalyzes the decarboxylation of four acetate groups of uroporphyrinogen-III to yield coproporphyrinogen-III. This Microcystis aeruginosa (strain NIES-843 / IAM M-2473) protein is Uroporphyrinogen decarboxylase.